Consider the following 158-residue polypeptide: Snaclec flavocetin-A subunit alpha (158 aa).

Positions M1–A23 are cleaved as a signal peptide. 3 disulfide bridges follow: C27–C38, C55–C152, and C127–C144. Positions Y34–K153 constitute a C-type lectin domain.

The protein belongs to the snaclec family. Tetramer of heterodimers of alpha and beta subunits (alphabeta)(4); disulfide-linked. In terms of tissue distribution, expressed by the venom gland.

The protein resides in the secreted. In terms of biological role, strong platelet aggregation inhibitor. Binds specifically to platelet glycoprotein Ibalpha (GP1BA) with high affinity and inhibits vWF-dependent platelet aggregation. Has also been observed to induce small agglutinates in washed platelets by binding to GPIb. The sequence is that of Snaclec flavocetin-A subunit alpha from Protobothrops flavoviridis (Habu).